The following is a 152-amino-acid chain: UPF0756 membrane protein Helmi_09930 (152 aa).

5 helical membrane passes run 6-26 (VLLI…TALA), 52-72 (TGLI…KVGL), 75-95 (VLLS…VLAT), 111-131 (IIVG…GIPV), and 132-152 (GPLM…WLSK).

This sequence belongs to the UPF0756 family.

The protein localises to the cell membrane. The polypeptide is UPF0756 membrane protein Helmi_09930 (Heliobacterium modesticaldum (strain ATCC 51547 / Ice1)).